The sequence spans 468 residues: uncharacterized protein (468 aa).

Residues 1 to 22 (MVKRSSHRQVVLDEDDEENYNN) are disordered. The RING-type zinc finger occupies 85 to 123 (CPICTEALQRPFTTHCGHTYCYECLLNWLKESKSCPTCR). Residues 386-402 (DSLNSSSNNSPSHNNIH) show a composition bias toward low complexity. The segment at 386 to 468 (DSLNSSSNNS…TIQLDSDEES (83 aa)) is disordered. Over residues 417 to 434 (IVTNGTGLRSSQSSSQNR) the composition is skewed to polar residues.

It is found in the nucleus. This is an uncharacterized protein from Schizosaccharomyces pombe (strain 972 / ATCC 24843) (Fission yeast).